A 255-amino-acid polypeptide reads, in one-letter code: 3-oxoacyl-[acyl-carrier-protein] reductase MabA (255 aa).

NADP(+)-binding positions include 33 to 35 (RGI), Arg-55, 69 to 70 (DV), Gly-98, Tyr-161, Lys-165, Ile-194, and Arg-205. The active-site Proton acceptor is the Tyr-161.

The protein belongs to the short-chain dehydrogenases/reductases (SDR) family. As to quaternary structure, homotetramer.

It is found in the secreted. The protein resides in the cell wall. The enzyme catalyses a (3R)-hydroxyacyl-[ACP] + NADP(+) = a 3-oxoacyl-[ACP] + NADPH + H(+). The protein operates within lipid metabolism; mycolic acid biosynthesis. Part of the mycobacterial fatty acid elongation system FAS-II, which is involved in mycolic acid biosynthesis. Catalyzes the NADPH-dependent reduction of beta-ketoacyl derivatives, the second step of the FAS-II elongation cycle. This Mycobacterium avium protein is 3-oxoacyl-[acyl-carrier-protein] reductase MabA.